Reading from the N-terminus, the 371-residue chain is Barbiturase 2 (371 aa).

Positions 1–104 (MTRPIEVRKV…TIFAYAPEGR (104 aa)) are RU A. Residues Arg53 and 83 to 84 (SG) contribute to the substrate site. Positions 112–247 (RVTVGYAMSE…AQIVVVGNAR (136 aa)) are RU B. Lys162 is an active-site residue. Substrate-binding positions include Asn194 and 230 to 231 (SS). Catalysis depends on Ser230, which acts as the Nucleophile. The interval 253–371 (FRVGHSIMKD…PVIAIVDLEA (119 aa)) is RU C. Position 303 (Glu303) interacts with Mg(2+). Substrate is bound by residues Lys330 and 349 to 350 (SV). Mg(2+) is bound by residues Ala352, Gln355, Gly356, Pro357, and Gly360.

The protein belongs to the cyclic amide hydrolase (CyAH) family. As to quaternary structure, homotetramer.

The catalysed reaction is barbiturate + H2O = 3-oxo-3-ureidopropanoate. It functions in the pathway pyrimidine metabolism; uracil degradation via oxidative pathway; malonate and urea from uracil: step 2/3. Responsible for the hydrolysis of barbituric acid (2,4,6-trihydroxy-1,3-pyrimidine), an intermediate in the oxidative catabolism of pyrimidines. Catalyzes the hydrolytic opening of the pyrimidine ring of barbituric acid to yield ureidomalonic acid. Can also use cyanuric acid as a substrate, albeit with lower efficiency. The protein is Barbiturase 2 of Nocardioides sp. (strain ATCC BAA-499 / JS614).